Here is a 94-residue protein sequence, read N- to C-terminus: Pyrimidine/purine nucleoside phosphorylase (94 aa).

This sequence belongs to the nucleoside phosphorylase PpnP family.

The enzyme catalyses a purine D-ribonucleoside + phosphate = a purine nucleobase + alpha-D-ribose 1-phosphate. It carries out the reaction adenosine + phosphate = alpha-D-ribose 1-phosphate + adenine. The catalysed reaction is cytidine + phosphate = cytosine + alpha-D-ribose 1-phosphate. It catalyses the reaction guanosine + phosphate = alpha-D-ribose 1-phosphate + guanine. The enzyme catalyses inosine + phosphate = alpha-D-ribose 1-phosphate + hypoxanthine. It carries out the reaction thymidine + phosphate = 2-deoxy-alpha-D-ribose 1-phosphate + thymine. The catalysed reaction is uridine + phosphate = alpha-D-ribose 1-phosphate + uracil. It catalyses the reaction xanthosine + phosphate = alpha-D-ribose 1-phosphate + xanthine. In terms of biological role, catalyzes the phosphorolysis of diverse nucleosides, yielding D-ribose 1-phosphate and the respective free bases. Can use uridine, adenosine, guanosine, cytidine, thymidine, inosine and xanthosine as substrates. Also catalyzes the reverse reactions. The polypeptide is Pyrimidine/purine nucleoside phosphorylase (Pectobacterium atrosepticum (strain SCRI 1043 / ATCC BAA-672) (Erwinia carotovora subsp. atroseptica)).